A 365-amino-acid chain; its full sequence is MRVLAAMSGGVDSAVAASRAVAAGHEVVGVHLALSQDPQTVRESSRGCCSLEDSADARRVCDKLGIPFYVWDFSDRFKEDVIDNFIDSYAIGETPNPCLRCNEKIKFAALLERGIALGFDAVVTGHYARLTQPADGGDGYLRRGVDPNKDQSYVLGVLGAHEIEHCMFPVGDTIKPEIREEASAAGFSVAKKPDSYDICFIPDGNTQAFLGKHIGMRPGMIVDQEGTQLREHAGVHEFTIGQRKGLDIKAPAADGRPRYVTDIDAKTGTVTVGTRENLKISTIHADRLKFLHPAMDGQIDCEVQVRAHGGVVSCSATIDRDADFMVLNLNEPLQGVARGQAAVLYLPDADGDIVLGSGTICHTES.

ATP is bound by residues 6–13 and L32; that span reads AMSGGVDS. The active-site Nucleophile is C101. A disulfide bridge connects residues C101 and C199. G125 is an ATP binding site. The interval 149–151 is interaction with tRNA; the sequence is KDQ. The active-site Cysteine persulfide intermediate is the C199.

This sequence belongs to the MnmA/TRMU family.

It localises to the cytoplasm. It catalyses the reaction S-sulfanyl-L-cysteinyl-[protein] + uridine(34) in tRNA + AH2 + ATP = 2-thiouridine(34) in tRNA + L-cysteinyl-[protein] + A + AMP + diphosphate + H(+). Its function is as follows. Catalyzes the 2-thiolation of uridine at the wobble position (U34) of tRNA, leading to the formation of s(2)U34. The chain is tRNA-specific 2-thiouridylase MnmA from Corynebacterium glutamicum (strain R).